A 502-amino-acid polypeptide reads, in one-letter code: MAAQRRSLLQSEQQPSWTDDLPLCHLSGVGSASNRSYSADGKGTESHPPEDNWLKFRSENNCFLYGVFNGYDGNRVTNFVAQRLSAELLLGQLNTEHTEADVRRVLLQAFDVVERSFLESIDDALAEKASLQSQLPEGVPQHQLPPQYQKILERLKALEREISGGAMAVVAVLLNSKLYVANVGTNRALLCKSTVDGLQVTQLNMDHTTENEDELFRLSQLGLDAGKIKQMGVICGQESTRRIGDYKVKYGYTDIDLLSAAKSKPIIAEPEIHGAQPLDGVTGFLVLMSEGLYKALEAAHGPGQANQEIAAMIDTEFAKQTSLDAVAQAVVDRVKRIHSDTFASGGERAKFCPRHEDMTLLVRNFGYPLGEMSQPTPTPAPGGRVYPVSVPYSSAQSTSKTSVTLSLVMPSQGQMVNGSHSASTLDEATPTLTNQSPTLTLQSTNTHTQSSSSSSDGGLFRSRPAHSLPPGEDGRVEPYVDFAEFYRLWSVDHGEQSVMTAP.

Positions 1-21 are disordered; the sequence is MAAQRRSLLQSEQQPSWTDDL. S7 bears the Phosphoserine mark. Residues 7–17 are compositionally biased toward polar residues; it reads SLLQSEQQPSW. In terms of domain architecture, PPM-type phosphatase spans 28–365; that stretch reads GVGSASNRSY…EDMTLLVRNF (338 aa). Residue S393 is glycosylated (O-linked (GlcNAc) serine). Polar residues predominate over residues 414–437; the sequence is QMVNGSHSASTLDEATPTLTNQSP. Positions 414–476 are disordered; that stretch reads QMVNGSHSAS…SLPPGEDGRV (63 aa). A Phosphoserine modification is found at S421. T429 carries the post-translational modification Phosphothreonine. S436 carries the phosphoserine modification. Low complexity predominate over residues 438–455; sequence TLTLQSTNTHTQSSSSSS. T440 carries the phosphothreonine modification.

Interacts with XIAP and BIRC7. Interacts with TRAF6 and MAP3K7; during IL-1 signaling. Identified in the TRIKA2 complex composed of MAP3K7, TAB1 and TAB2. Interacts with TRAF6 and MAPK14; these interactions allow MAPK14 autophosphorylation. Interacts with STING1; interaction takes place following cGAMP activation and promotes TAB1 recruitment to the endoplasmic reticulum, triggering MAP3K7/TAK1 activation and STING1 phosphorylation. In terms of processing, phosphorylated at all three sites Ser-421, Thr-429 and Ser-436 by MAPK14 when cells were exposed to cellular stresses, or stimulated with TNF-alpha, IL1 or LPS. These phosphorylations inhibit TAK1 activation by a feedback control mechanism. Dephosphorylated by DUSP14 at Ser-436, leading to TAB1-MAP3K7/TAK1 complex inactivation in T-cells. Ubiquitinated by MAP3K1 with 'Lys-63'-linked polyubiquitin; leading to activation of TAK1 and of JNK and p38 MAP kinases following EGF and TGF-beta stimulation. Ubiquitinated by ITCH with 'Lys-48'-linked polyubiquitin; leading to proteasomal degradation. Ubiquitinated by RNF114 during maternal-to-zygotic transition; leading to degradation. Post-translationally, O-GlcNAcylated at Ser-393 is required for full MAP3K7/TAK1 activation upon stimulation with IL-1 or osmotic stress.

The protein resides in the cytoplasm. The protein localises to the cytosol. Its subcellular location is the endoplasmic reticulum membrane. Functionally, key adapter protein that plays an essential role in JNK and NF-kappa-B activation and proinflammatory cytokines production in response to stimulation with TLRs and cytokines. Mechanistically, associates with the catalytic domain of MAP3K7/TAK1 to trigger MAP3K7/TAK1 autophosphorylation leading to its full activation. Similarly, associates with MAPK14 and triggers its autophosphorylation and subsequent activation. In turn, MAPK14 phosphorylates TAB1 and inhibits MAP3K7/TAK1 activation in a feedback control mechanism. Also plays a role in recruiting MAPK14 to the TAK1 complex for the phosphorylation of the TAB2 and TAB3 regulatory subunits. This chain is TGF-beta-activated kinase 1 and MAP3K7-binding protein 1 (Tab1), found in Mus musculus (Mouse).